A 376-amino-acid chain; its full sequence is Eugenol O-methyltransferase (376 aa).

Positions 219, 242, 263, and 276 each coordinate S-adenosyl-L-methionine. Histidine 280 functions as the Proton acceptor in the catalytic mechanism.

This sequence belongs to the class I-like SAM-binding methyltransferase superfamily. Cation-independent O-methyltransferase family. COMT subfamily. Homodimer. Expressed predominantly in root hairs.

It catalyses the reaction (E)-isoeugenol + S-adenosyl-L-methionine = (E)-isomethyleugenol + S-adenosyl-L-homocysteine + H(+). O-methyltransferase. Substrate preference is eugenol &gt;&gt; orcinol monomethyl ether &gt; resorcinol monomethyl ether. The chain is Eugenol O-methyltransferase (EOMT) from Sorghum bicolor (Sorghum).